The sequence spans 224 residues: Tumor protein D52 (224 aa).

A disordered region spans residues leucine 29–valine 53. Phosphothreonine is present on threonine 35. Serine 36 and serine 40 each carry phosphoserine. The stretch at valine 61–serine 113 forms a coiled coil. A phosphoserine mark is found at threonine 138, serine 175, and serine 223. Positions lysine 186 to proline 224 are disordered. Low complexity predominate over residues asparagine 202 to proline 224.

This sequence belongs to the TPD52 family. As to quaternary structure, forms a homodimer or heterodimer with other members of the family. In terms of tissue distribution, isoform 2 is expressed at higher levels in kidney and brain than in liver, lung, testis and heart. Within the brain, isoform 2 is highly expressed in the granular layer of the cerebellum, the cortex and the hippocampus. In embryos, isoform 2 is expressed in the epithelium of the developing intestine, stomach, olfactory epithelium, neuronal layers of the retina, salivary gland, kidney and dorsal root ganglion.

In Mus musculus (Mouse), this protein is Tumor protein D52 (Tpd52).